Consider the following 214-residue polypeptide: Adenylate kinase (214 aa).

10–15 contacts ATP; it reads GAGKGT. The NMP stretch occupies residues 30–59; that stretch reads STGDMLRAAVKAQSELGRQAKALMDAGKLV. AMP is bound by residues Thr31, Arg36, 57 to 59, 85 to 88, and Gln92; these read KLV and GFPR. The LID stretch occupies residues 122–159; it reads GRRVHAPSGRVYHVKFNPPKQEGKDDVTGELLTSRKDD. Residues Arg123 and 132-133 contribute to the ATP site; that span reads VY. The AMP site is built by Arg156 and Arg167. An ATP-binding site is contributed by Arg200.

It belongs to the adenylate kinase family. Monomer.

Its subcellular location is the cytoplasm. It catalyses the reaction AMP + ATP = 2 ADP. It functions in the pathway purine metabolism; AMP biosynthesis via salvage pathway; AMP from ADP: step 1/1. Its function is as follows. Catalyzes the reversible transfer of the terminal phosphate group between ATP and AMP. Plays an important role in cellular energy homeostasis and in adenine nucleotide metabolism. This Sodalis glossinidius (strain morsitans) protein is Adenylate kinase.